The chain runs to 132 residues: Fatty acid-binding protein, intestinal (132 aa).

The residue at position 2 (A2) is an N-acetylalanine. Residues W83 and R107 each contribute to the hexadecanoate site. Tetradecanoate is bound by residues W83 and R107.

The protein belongs to the calycin superfamily. Fatty-acid binding protein (FABP) family.

It localises to the cytoplasm. Its function is as follows. FABPs are thought to play a role in the intracellular transport of long-chain fatty acids and their acyl-CoA esters. The protein is Fatty acid-binding protein, intestinal (fabp2) of Xenopus laevis (African clawed frog).